The chain runs to 366 residues: Chorismate synthase (366 aa).

NADP(+) contacts are provided by arginine 48 and arginine 54. Residues 125–127 (RSS), 238–239 (NA), glycine 278, 293–297 (KPTSS), and arginine 319 contribute to the FMN site.

Belongs to the chorismate synthase family. In terms of assembly, homotetramer. The cofactor is FMNH2.

The enzyme catalyses 5-O-(1-carboxyvinyl)-3-phosphoshikimate = chorismate + phosphate. It functions in the pathway metabolic intermediate biosynthesis; chorismate biosynthesis; chorismate from D-erythrose 4-phosphate and phosphoenolpyruvate: step 7/7. Its function is as follows. Catalyzes the anti-1,4-elimination of the C-3 phosphate and the C-6 proR hydrogen from 5-enolpyruvylshikimate-3-phosphate (EPSP) to yield chorismate, which is the branch point compound that serves as the starting substrate for the three terminal pathways of aromatic amino acid biosynthesis. This reaction introduces a second double bond into the aromatic ring system. The chain is Chorismate synthase from Chromobacterium violaceum (strain ATCC 12472 / DSM 30191 / JCM 1249 / CCUG 213 / NBRC 12614 / NCIMB 9131 / NCTC 9757 / MK).